Here is a 301-residue protein sequence, read N- to C-terminus: GTPase Era (301 aa).

Residues 7–175 (YCGFIAIVGR…AGIVRKHLPE (169 aa)) enclose the Era-type G domain. The tract at residues 15-22 (GRPNVGKS) is G1. GTP is bound at residue 15-22 (GRPNVGKS). The interval 41 to 45 (QTTRH) is G2. Positions 62–65 (DTPG) are G3. GTP contacts are provided by residues 62-66 (DTPGL) and 124-127 (NKVD). The tract at residues 124–127 (NKVD) is G4. A G5 region spans residues 154 to 156 (ISA). Positions 206-283 (LGAELPYSVT…HLELWVKVKS (78 aa)) constitute a KH type-2 domain.

The protein belongs to the TRAFAC class TrmE-Era-EngA-EngB-Septin-like GTPase superfamily. Era GTPase family. Monomer.

It localises to the cytoplasm. Its subcellular location is the cell inner membrane. Functionally, an essential GTPase that binds both GDP and GTP, with rapid nucleotide exchange. Plays a role in 16S rRNA processing and 30S ribosomal subunit biogenesis and possibly also in cell cycle regulation and energy metabolism. This is GTPase Era from Salmonella agona (strain SL483).